The following is a 416-amino-acid chain: Glutamyl-tRNA reductase (416 aa).

Substrate-binding positions include 49–52 (TCNR), Ser105, 110–112 (EPQ), and Gln116. The active-site Nucleophile is the Cys50. 185 to 190 (GAGEMI) lines the NADP(+) pocket.

It belongs to the glutamyl-tRNA reductase family. Homodimer.

The catalysed reaction is (S)-4-amino-5-oxopentanoate + tRNA(Glu) + NADP(+) = L-glutamyl-tRNA(Glu) + NADPH + H(+). It participates in porphyrin-containing compound metabolism; protoporphyrin-IX biosynthesis; 5-aminolevulinate from L-glutamyl-tRNA(Glu): step 1/2. Its function is as follows. Catalyzes the NADPH-dependent reduction of glutamyl-tRNA(Glu) to glutamate 1-semialdehyde (GSA). In Nitrosomonas europaea (strain ATCC 19718 / CIP 103999 / KCTC 2705 / NBRC 14298), this protein is Glutamyl-tRNA reductase.